The sequence spans 139 residues: Nucleoside diphosphate kinase (139 aa).

The ATP site is built by Lys10, Phe58, Arg86, Thr92, Arg104, and Asn114. The active-site Pros-phosphohistidine intermediate is the His117.

It belongs to the NDK family. As to quaternary structure, homotetramer. The cofactor is Mg(2+).

It localises to the cytoplasm. It catalyses the reaction a 2'-deoxyribonucleoside 5'-diphosphate + ATP = a 2'-deoxyribonucleoside 5'-triphosphate + ADP. It carries out the reaction a ribonucleoside 5'-diphosphate + ATP = a ribonucleoside 5'-triphosphate + ADP. Major role in the synthesis of nucleoside triphosphates other than ATP. The ATP gamma phosphate is transferred to the NDP beta phosphate via a ping-pong mechanism, using a phosphorylated active-site intermediate. This is Nucleoside diphosphate kinase from Rhodococcus opacus (strain B4).